The chain runs to 232 residues: Large ribosomal subunit protein uL1 (232 aa).

The protein belongs to the universal ribosomal protein uL1 family. As to quaternary structure, part of the 50S ribosomal subunit.

Its function is as follows. Binds directly to 23S rRNA. The L1 stalk is quite mobile in the ribosome, and is involved in E site tRNA release. Functionally, protein L1 is also a translational repressor protein, it controls the translation of the L11 operon by binding to its mRNA. This chain is Large ribosomal subunit protein uL1, found in Xylella fastidiosa (strain M23).